The chain runs to 499 residues: Histidine ammonia-lyase (499 aa).

Positions 142–144 (ASG) form a cross-link, 5-imidazolinone (Ala-Gly). A 2,3-didehydroalanine (Ser) modification is found at Ser-143.

The protein belongs to the PAL/histidase family. Post-translationally, contains an active site 4-methylidene-imidazol-5-one (MIO), which is formed autocatalytically by cyclization and dehydration of residues Ala-Ser-Gly.

Its subcellular location is the cytoplasm. It catalyses the reaction L-histidine = trans-urocanate + NH4(+). It participates in amino-acid degradation; L-histidine degradation into L-glutamate; N-formimidoyl-L-glutamate from L-histidine: step 1/3. The sequence is that of Histidine ammonia-lyase from Staphylococcus saprophyticus subsp. saprophyticus (strain ATCC 15305 / DSM 20229 / NCIMB 8711 / NCTC 7292 / S-41).